The chain runs to 484 residues: Probable cytosol aminopeptidase (484 aa).

The Mn(2+) site is built by lysine 256 and aspartate 261. Lysine 268 is a catalytic residue. Positions 279, 338, and 340 each coordinate Mn(2+). Arginine 342 is an active-site residue.

The protein belongs to the peptidase M17 family. Mn(2+) serves as cofactor.

It localises to the cytoplasm. It carries out the reaction Release of an N-terminal amino acid, Xaa-|-Yaa-, in which Xaa is preferably Leu, but may be other amino acids including Pro although not Arg or Lys, and Yaa may be Pro. Amino acid amides and methyl esters are also readily hydrolyzed, but rates on arylamides are exceedingly low.. It catalyses the reaction Release of an N-terminal amino acid, preferentially leucine, but not glutamic or aspartic acids.. Presumably involved in the processing and regular turnover of intracellular proteins. Catalyzes the removal of unsubstituted N-terminal amino acids from various peptides. This is Probable cytosol aminopeptidase from Methylibium petroleiphilum (strain ATCC BAA-1232 / LMG 22953 / PM1).